The chain runs to 196 residues: Transmembrane protein 52 (196 aa).

An N-terminal signal peptide occupies residues 1-28 (MAPGPSATQGILLLLPLLPLSQVTLGSA). The helical transmembrane segment at 47 to 67 (LWHVGLILLAILLMLLCGVTA) threads the bilayer. Positions 162 to 196 (EEVAAPSEKTNSLPEALEPETTGGPQEPGPSAQRP) are disordered.

It is found in the membrane. This Mus musculus (Mouse) protein is Transmembrane protein 52 (Tmem52).